A 167-amino-acid chain; its full sequence is HTH-type transcriptional repressor YetL (167 aa).

In terms of domain architecture, HTH marR-type spans 26–160 (SLELFLSLFD…FVKMLGDLFE (135 aa)). The segment at residues 74 to 97 (PTELAKRSNVTKATITGLLDGLAR) is a DNA-binding region (H-T-H motif).

As to quaternary structure, homodimer. The N- and C-terminal helices from both subunits stabilize YetL dimer via extensive intersubunit interactions.

Binding to the yetM cis sequence is clearly inhibited by kaempferol, morin, apigenin and luteolin, slightly inhibited by quercetin and galangin, but no inhibition is observed with the other flavonoids. Flavonoid binding may induce conformational changes and modulate interaction with DNA. In terms of biological role, negatively regulates yetM expression and its own expression. Binds specifically to corresponding single sites in the divergent yetL and yetM promoter regions, with higher affinity to the yetM region. Recognizes a 28-mer operator of double-stranded DNA that contains a palindromic sequence. In Bacillus subtilis (strain 168), this protein is HTH-type transcriptional repressor YetL (yetL).